Reading from the N-terminus, the 89-residue chain is Large ribosomal subunit protein uL23cz/uL23cy (89 aa).

The protein belongs to the universal ribosomal protein uL23 family. Part of the 50S ribosomal subunit.

It localises to the plastid. The protein localises to the chloroplast. In terms of biological role, binds to 23S rRNA. The chain is Large ribosomal subunit protein uL23cz/uL23cy (rpl23-A) from Pelargonium hortorum (Common geranium).